The primary structure comprises 271 residues: Centromere protein K (271 aa).

Coiled coils occupy residues D11 to L44 and L102 to Q151.

The protein belongs to the CENP-K/MCM22 family. As to quaternary structure, component of the CENPA-CAD complex, composed of CENPI, CENPK, CENPL, CENPO, CENPP, CENPQ, CENPR and CENPS. The CENPA-CAD complex interacts with the CENPA-NAC complex, at least composed of CENPA, CENPC, CENPH, CENPM, CENPN, CENPT and CENPU. May interact with Sox6. In terms of tissue distribution, highly expressed in testis.

The protein resides in the nucleus. It localises to the chromosome. Its subcellular location is the centromere. It is found in the kinetochore. In terms of biological role, component of the CENPA-CAD (nucleosome distal) complex, a complex recruited to centromeres which is involved in assembly of kinetochore proteins, mitotic progression and chromosome segregation. May be involved in incorporation of newly synthesized CENPA into centromeres via its interaction with the CENPA-NAC complex. Acts in coordination with KNL1 to recruit the NDC80 complex to the outer kinetochore. This chain is Centromere protein K (Cenpk), found in Mus musculus (Mouse).